Here is a 414-residue protein sequence, read N- to C-terminus: COUP transcription factor 2 (414 aa).

The interval 1-72 (MAMVVSTWRD…PGGPGSDKQQ (72 aa)) is disordered. Positions 27-37 (PPVPGPPPGAP) are enriched in pro residues. Residues 38–57 (HTPQTPGQGGPASTPAQTAA) are compositionally biased toward low complexity. A Phosphothreonine modification is found at Thr51. The segment covering 58–67 (GGQGGPGGPG) has biased composition (gly residues). A DNA-binding region (nuclear receptor) is located at residues 76 to 151 (HIECVVCGDK…VGMRREAVQR (76 aa)). NR C4-type zinc fingers lie at residues 79-99 (CVVC…CEGC) and 115-139 (CRAN…LKKC). The interaction with ZFPM2 stretch occupies residues 117 to 414 (ANRNCPIDQH…SFNWPYMAIQ (298 aa)). Residues 177–403 (YLSGYISLLL…TLIRDMLLSG (227 aa)) enclose the NR LBD domain. Positions 337–414 (LQEKSQCALE…SFNWPYMAIQ (78 aa)) are important for dimerization.

The protein belongs to the nuclear hormone receptor family. NR2 subfamily. In terms of assembly, interacts with SQSTM1. Binds DNA as a dimer; homodimer or heterodimer with NR2F6. Interacts with NCOA1, NCOA2, NCOA3 and PPARGC1A. Interacts with ZFPM2.

Its subcellular location is the nucleus. Functionally, ligand-activated transcription factor. Activated by high concentrations of 9-cis-retinoic acid and all-trans-retinoic acid, but not by dexamethasone, cortisol or progesterone (in vitro). Regulation of the apolipoprotein A-I gene transcription. Binds to DNA site A. May be required to establish ovary identity during early gonad development. This is COUP transcription factor 2 (NR2F2) from Bos taurus (Bovine).